The primary structure comprises 268 residues: Ribonuclease P protein subunit p30 (268 aa).

Ala-2 carries the post-translational modification N-acetylalanine. Ser-251 is modified (phosphoserine).

It belongs to the eukaryotic/archaeal RNase P protein component 3 family. Component of nuclear RNase P and RNase MRP ribonucleoproteins. RNase P consists of a catalytic RNA moiety and about 10 protein subunits; POP1, POP4, POP5, POP7, RPP14, RPP21, RPP25, RPP30, RPP38 and RPP40. Within the RNase P complex, POP1, POP7 and RPP25 form the 'finger' subcomplex, POP5, RPP14, RPP40 and homodimeric RPP30 form the 'palm' subcomplex, and RPP21, POP4 and RPP38 form the 'wrist' subcomplex. All subunits of the RNase P complex interact with the catalytic RNA. Several subunits of RNase P are also part of the RNase MRP complex. RNase MRP consists of a catalytic RNA moiety and about 8 protein subunits; POP1, POP7, RPP25, RPP30, RPP38, RPP40 and possibly also POP4 and POP5.

The protein localises to the nucleus. The protein resides in the nucleolus. In terms of biological role, component of ribonuclease P, a ribonucleoprotein complex that generates mature tRNA molecules by cleaving their 5'-ends. Also a component of the MRP ribonuclease complex, which cleaves pre-rRNA sequences. The sequence is that of Ribonuclease P protein subunit p30 (RPP30) from Bos taurus (Bovine).